Consider the following 279-residue polypeptide: Undecaprenyl-diphosphatase (279 aa).

Helical transmembrane passes span 2 to 22 (LIIELLKAIFFGIIEGITEWL), 44 to 64 (AFIEMFNIVIQLGAIIAVMLI), 85 to 105 (WQLWLKVVIACIPSILIAVPL), 113 to 133 (FYFMVPIAIALIVYGIAFIWI), 163 to 183 (VLSIVPGTSRSGATILGAIIL), 188 to 208 (TVAADFTFFLAIPTMFGYSGL), 223 to 243 (AQVLILLVASLTAFVVSLLAI), and 255 to 275 (FTIFGKYRIVLGSLLLIYSFF).

This sequence belongs to the UppP family.

It localises to the cell membrane. The enzyme catalyses di-trans,octa-cis-undecaprenyl diphosphate + H2O = di-trans,octa-cis-undecaprenyl phosphate + phosphate + H(+). Its function is as follows. Catalyzes the dephosphorylation of undecaprenyl diphosphate (UPP). Confers resistance to bacitracin. In Streptococcus pyogenes serotype M28 (strain MGAS6180), this protein is Undecaprenyl-diphosphatase.